The chain runs to 452 residues: Pup--protein ligase (452 aa).

Mg(2+) is bound at residue Glu9. Arg53 contributes to the ATP binding site. Tyr55 contributes to the Mg(2+) binding site. Asp57 (proton acceptor) is an active-site residue. Glu63 is a binding site for Mg(2+). Residues Thr66 and Trp419 each coordinate ATP.

The protein belongs to the Pup ligase/Pup deamidase family. Pup-conjugating enzyme subfamily.

The enzyme catalyses ATP + [prokaryotic ubiquitin-like protein]-L-glutamate + [protein]-L-lysine = ADP + phosphate + N(6)-([prokaryotic ubiquitin-like protein]-gamma-L-glutamyl)-[protein]-L-lysine.. It participates in protein degradation; proteasomal Pup-dependent pathway. The protein operates within protein modification; protein pupylation. In terms of biological role, catalyzes the covalent attachment of the prokaryotic ubiquitin-like protein modifier Pup to the proteasomal substrate proteins, thereby targeting them for proteasomal degradation. This tagging system is termed pupylation. The ligation reaction involves the side-chain carboxylate of the C-terminal glutamate of Pup and the side-chain amino group of a substrate lysine. This Salinispora arenicola (strain CNS-205) protein is Pup--protein ligase.